A 227-amino-acid chain; its full sequence is Cytochrome c oxidase subunit 2 (227 aa).

At 1–14 the chain is on the mitochondrial intermembrane side; that stretch reads MAHPVQLGLQDATS. The chain crosses the membrane as a helical span at residues 15-45; the sequence is PVMEELITFHDQALMAMFLISFLILYALSST. The Mitochondrial matrix segment spans residues 46-59; that stretch reads LTTKLTNTNITDAQ. Residues 60-87 form a helical membrane-spanning segment; sequence EMETIWTILPAVILILIALPSLRILYMT. The Mitochondrial intermembrane segment spans residues 88–227; it reads DEINNPSFTI…IFEMGPVFTL (140 aa). The Cu cation site is built by His161, Cys196, Glu198, Cys200, His204, and Met207. Glu198 contributes to the Mg(2+) binding site.

This sequence belongs to the cytochrome c oxidase subunit 2 family. In terms of assembly, component of the cytochrome c oxidase (complex IV, CIV), a multisubunit enzyme composed of 14 subunits. The complex is composed of a catalytic core of 3 subunits MT-CO1, MT-CO2 and MT-CO3, encoded in the mitochondrial DNA, and 11 supernumerary subunits COX4I, COX5A, COX5B, COX6A, COX6B, COX6C, COX7A, COX7B, COX7C, COX8 and NDUFA4, which are encoded in the nuclear genome. The complex exists as a monomer or a dimer and forms supercomplexes (SCs) in the inner mitochondrial membrane with NADH-ubiquinone oxidoreductase (complex I, CI) and ubiquinol-cytochrome c oxidoreductase (cytochrome b-c1 complex, complex III, CIII), resulting in different assemblies (supercomplex SCI(1)III(2)IV(1) and megacomplex MCI(2)III(2)IV(2)). Found in a complex with TMEM177, COA6, COX18, COX20, SCO1 and SCO2. Interacts with TMEM177 in a COX20-dependent manner. Interacts with COX20. Interacts with COX16. It depends on Cu cation as a cofactor.

It localises to the mitochondrion inner membrane. The enzyme catalyses 4 Fe(II)-[cytochrome c] + O2 + 8 H(+)(in) = 4 Fe(III)-[cytochrome c] + 2 H2O + 4 H(+)(out). Component of the cytochrome c oxidase, the last enzyme in the mitochondrial electron transport chain which drives oxidative phosphorylation. The respiratory chain contains 3 multisubunit complexes succinate dehydrogenase (complex II, CII), ubiquinol-cytochrome c oxidoreductase (cytochrome b-c1 complex, complex III, CIII) and cytochrome c oxidase (complex IV, CIV), that cooperate to transfer electrons derived from NADH and succinate to molecular oxygen, creating an electrochemical gradient over the inner membrane that drives transmembrane transport and the ATP synthase. Cytochrome c oxidase is the component of the respiratory chain that catalyzes the reduction of oxygen to water. Electrons originating from reduced cytochrome c in the intermembrane space (IMS) are transferred via the dinuclear copper A center (CU(A)) of subunit 2 and heme A of subunit 1 to the active site in subunit 1, a binuclear center (BNC) formed by heme A3 and copper B (CU(B)). The BNC reduces molecular oxygen to 2 water molecules using 4 electrons from cytochrome c in the IMS and 4 protons from the mitochondrial matrix. This Papio anubis (Olive baboon) protein is Cytochrome c oxidase subunit 2 (MT-CO2).